Consider the following 700-residue polypeptide: Serine/threonine-protein kinase WNK1 (700 aa).

Residues G24 to L281 enclose the Protein kinase domain. ATP-binding positions include T104–F107 and K154. D171 functions as the Proton acceptor in the catalytic mechanism. Low complexity predominate over residues N314–N339. 3 disordered regions span residues N314–G345, E551–Y575, and E647–G666. Residues E551–S565 are compositionally biased toward basic and acidic residues. A compositionally biased stretch (acidic residues) spans E566 to Y575.

It belongs to the protein kinase superfamily. Ser/Thr protein kinase family. WNK subfamily. Autophosphorylated.

It catalyses the reaction L-seryl-[protein] + ATP = O-phospho-L-seryl-[protein] + ADP + H(+). It carries out the reaction L-threonyl-[protein] + ATP = O-phospho-L-threonyl-[protein] + ADP + H(+). In terms of biological role, regulates flowering time by modulating the photoperiod pathway. Phosphorylates APRR3. This Arabidopsis thaliana (Mouse-ear cress) protein is Serine/threonine-protein kinase WNK1 (WNK1).